A 153-amino-acid chain; its full sequence is MRKKIEIFTDGSCFGNPGPGGYGAILRYKKYEKEHSAGFLLTTNNRMELMAAIIALEFLRDPCEAIVYIDSKYVHQGVIQWIYNWKKHNWKNSAKKIIKNLDLWQRLDVVSNLHVIHWRWVKSHTGHPENERCDELARIAAEHPKFEDIGYKR.

One can recognise an RNase H type-1 domain in the interval 1 to 142; that stretch reads MRKKIEIFTD…CDELARIAAE (142 aa). D10, E48, D70, and D134 together coordinate Mg(2+).

It belongs to the RNase H family. In terms of assembly, monomer. Mg(2+) serves as cofactor.

It is found in the cytoplasm. The catalysed reaction is Endonucleolytic cleavage to 5'-phosphomonoester.. Functionally, endonuclease that specifically degrades the RNA of RNA-DNA hybrids. In Baumannia cicadellinicola subsp. Homalodisca coagulata, this protein is Ribonuclease H.